A 125-amino-acid polypeptide reads, in one-letter code: Glycine cleavage system H protein (125 aa).

Residues V22–K104 enclose the Lipoyl-binding domain. K63 is modified (N6-lipoyllysine).

The protein belongs to the GcvH family. In terms of assembly, the glycine cleavage system is composed of four proteins: P, T, L and H. (R)-lipoate is required as a cofactor.

In terms of biological role, the glycine cleavage system catalyzes the degradation of glycine. The H protein shuttles the methylamine group of glycine from the P protein to the T protein. In Brucella abortus (strain 2308), this protein is Glycine cleavage system H protein.